The sequence spans 541 residues: Chaperonin GroEL 5 (541 aa).

ATP contacts are provided by residues Thr30–Pro33, Gly415, and Asp496.

The protein belongs to the chaperonin (HSP60) family. In terms of assembly, forms a cylinder of 14 subunits composed of two heptameric rings stacked back-to-back. Interacts with the co-chaperonin GroES.

The protein localises to the cytoplasm. The catalysed reaction is ATP + H2O + a folded polypeptide = ADP + phosphate + an unfolded polypeptide.. Functionally, together with its co-chaperonin GroES, plays an essential role in assisting protein folding. The GroEL-GroES system forms a nano-cage that allows encapsulation of the non-native substrate proteins and provides a physical environment optimized to promote and accelerate protein folding. This is Chaperonin GroEL 5 from Bradyrhizobium diazoefficiens (strain JCM 10833 / BCRC 13528 / IAM 13628 / NBRC 14792 / USDA 110).